Reading from the N-terminus, the 363-residue chain is Ribosomal RNA large subunit methyltransferase M (363 aa).

Residues S194, 227 to 230 (CPGG), D246, D266, and D284 contribute to the S-adenosyl-L-methionine site. The Proton acceptor role is filled by K313.

Belongs to the class I-like SAM-binding methyltransferase superfamily. RNA methyltransferase RlmE family. RlmM subfamily. As to quaternary structure, monomer.

The protein resides in the cytoplasm. The enzyme catalyses cytidine(2498) in 23S rRNA + S-adenosyl-L-methionine = 2'-O-methylcytidine(2498) in 23S rRNA + S-adenosyl-L-homocysteine + H(+). Functionally, catalyzes the 2'-O-methylation at nucleotide C2498 in 23S rRNA. In Mannheimia succiniciproducens (strain KCTC 0769BP / MBEL55E), this protein is Ribosomal RNA large subunit methyltransferase M.